Reading from the N-terminus, the 274-residue chain is NH(3)-dependent NAD(+) synthetase (274 aa).

Residue 46–53 participates in ATP binding; it reads GISGGQDS. Mg(2+) is bound at residue aspartate 52. Arginine 140 contacts deamido-NAD(+). An ATP-binding site is contributed by threonine 160. Residue glutamate 165 coordinates Mg(2+). Deamido-NAD(+) is bound by residues lysine 173 and aspartate 180. Lysine 189 and threonine 211 together coordinate ATP. 260–261 serves as a coordination point for deamido-NAD(+); the sequence is HK.

Belongs to the NAD synthetase family. In terms of assembly, homodimer.

It carries out the reaction deamido-NAD(+) + NH4(+) + ATP = AMP + diphosphate + NAD(+) + H(+). The protein operates within cofactor biosynthesis; NAD(+) biosynthesis; NAD(+) from deamido-NAD(+) (ammonia route): step 1/1. Catalyzes the ATP-dependent amidation of deamido-NAD to form NAD. Uses ammonia as a nitrogen source. The protein is NH(3)-dependent NAD(+) synthetase of Streptococcus equi subsp. equi (strain 4047).